The following is a 907-amino-acid chain: Probable ubiquitin-conjugating enzyme E2 24 (907 aa).

Disordered stretches follow at residues 1-23 and 485-509; these read MEMS…EHEE and SSTV…EASS. Residues 495 to 509 are compositionally biased toward polar residues; sequence QDLSQKISQSDEASS. Residues 662–822 enclose the UBC core domain; that stretch reads SWVKKVQQEW…AFLITCKSMI (161 aa). The active-site Glycyl thioester intermediate is Cys748.

This sequence belongs to the ubiquitin-conjugating enzyme family. Interacts with PHO1. Interacts with NLA. As to expression, expressed in the vascular tissues of cotyledons, leaves, roots, sepals, filaments, anthers and junctions between the inflorescence stems and siliques.

It is found in the golgi apparatus membrane. The protein resides in the endoplasmic reticulum membrane. The enzyme catalyses S-ubiquitinyl-[E1 ubiquitin-activating enzyme]-L-cysteine + [E2 ubiquitin-conjugating enzyme]-L-cysteine = [E1 ubiquitin-activating enzyme]-L-cysteine + S-ubiquitinyl-[E2 ubiquitin-conjugating enzyme]-L-cysteine.. The protein operates within protein modification; protein ubiquitination. E2 ubiquitin-protein ligase that mediates E1-dependent protein ubiquitination. Mediates PHO1 degradation through multivesicular body-mediated vacuolar proteolysis in response to inorganic phosphate (Pi) availability. Negatively regulates the protein abundance of PHF1 and PHT1s under Pi-sufficient conditions by facilitating the degradation of PHT1 proteins at the endomembrane. Functions cooperatively with NLA to regulate the abundance of the inorganic phosphate (Pi) transporters PHT1-1, PHT1-2 and PHT1-3 in different subcellular compartments. Regulates Pi homeostasis by mediating, cooperatively with NLA, polyubiquitination of PHT1-4 and its targeting for degradation. This Arabidopsis thaliana (Mouse-ear cress) protein is Probable ubiquitin-conjugating enzyme E2 24.